A 274-amino-acid chain; its full sequence is Serine protease 28 (274 aa).

Residues 1–26 (MFRLLLLALSCLESTVFMASVSISRS) form the signal peptide. The Peptidase S1 domain maps to 31-274 (IVGGQRTPPG…SLAWIHQHIQ (244 aa)). Cys-62 and Cys-78 are oxidised to a cystine. The active-site Charge relay system is His-77. A glycan (N-linked (GlcNAc...) asparagine) is linked at Asn-106. The active-site Charge relay system is the Asp-124. Intrachain disulfides connect Cys-158–Cys-233, Cys-191–Cys-214, and Cys-223–Cys-251. The Charge relay system role is filled by Ser-227.

Belongs to the peptidase S1 family. Homooligomer, heterodimer and heterotetramer. Able to form homo- and hetero- tetrameric structures. Heterotetramer is far more stable than the homotetramer. In terms of tissue distribution, expressed in embryos throughout the preimplantation period, during blastocyst hatching and embryo outgrowth. Found in uterus especially in glandular epithelium.

It localises to the secreted. Its activity is regulated as follows. Inhibited by benzamidine, (4-amidino-phenyl)-methane-sulfonyl (APMSF), N-p-tosyl-L-lysine chloromethylketone (TLCK), gabexate, mesylate, BABIM and trypsin soybean inhibitor (TSI). In terms of biological role, involved in embryo hatching and implantation. The polypeptide is Serine protease 28 (Prss28) (Mus musculus (Mouse)).